We begin with the raw amino-acid sequence, 548 residues long: Cleavage and polyadenylation specificity factor subunit 6 (548 aa).

Positions 81-161 (IALYIGNLTW…QKPIVTPCNK (81 aa)) constitute an RRM domain. Over residues 169–180 (MQSRKTATQAGQ) the composition is skewed to polar residues. Disordered regions lie at residues 169-401 (MQSR…MDVV) and 473-548 (LHGI…YRHR). Pro residues-rich tracts occupy residues 221–279 (PAGP…PPVM), 294–362 (PPGP…PPPG), and 373–384 (GPPPSDPYGRPP). 2 stretches are compositionally biased toward basic and acidic residues: residues 385–400 (PYER…DMDV) and 490–500 (RSRERDHSRSR). Residues 501–511 (EKSRRHKSRSR) show a composition bias toward basic residues. Residues 512–548 (DRHDDYYRERSRERERHRDRERDRDRERDREREYRHR) show a composition bias toward basic and acidic residues.

It belongs to the RRM CPSF6/7 family. Component of the cleavage factor Im (CFIm) complex.

Its subcellular location is the nucleus. The protein resides in the nucleoplasm. The protein localises to the nucleus speckle. It localises to the cytoplasm. Its function is as follows. Component of the cleavage factor Im (CFIm) complex that functions as an activator of the pre-mRNA 3'-end cleavage and polyadenylation processing required for the maturation of pre-mRNA into functional mRNAs. CFIm contributes to the recruitment of multiprotein complexes on specific sequences on the pre-mRNA 3'-end, so called cleavage and polyadenylation signals (pA signals). Most pre-mRNAs contain multiple pA signals, resulting in alternative cleavage and polyadenylation (APA) producing mRNAs with variable 3'-end formation. The CFIm complex acts as a key regulator of cleavage and polyadenylation site choice during APA through its binding to 5'-UGUA-3' elements localized in the 3'-untranslated region (UTR) for a huge number of pre-mRNAs. Plays a role in mRNA export. The sequence is that of Cleavage and polyadenylation specificity factor subunit 6 from Xenopus laevis (African clawed frog).